Consider the following 273-residue polypeptide: Gamma-glutamyl cyclotransferase gliK (273 aa).

Residues 227 to 243 (WLGWIILTLYGLMWSYH) form a helical membrane-spanning segment.

Belongs to the class-I pyridoxal-phosphate-dependent aminotransferase family.

The protein resides in the membrane. The enzyme catalyses an alpha-(gamma-L-glutamyl)-L-amino acid = 5-oxo-L-proline + an L-alpha-amino acid. The protein operates within mycotoxin biosynthesis. Gamma-glutamyl cyclotransferase-like protein; part of the gene cluster that mediates the biosynthesis of gliotoxin, a member of the epipolythiodioxopiperazine (ETP) class of toxins characterized by a disulfide bridged cyclic dipeptide. The first step in gliotoxin biosynthesis is the condensation of serine and phenylalanine to form the cyclo-L-phenylalanyl-L-serine diketopiperazine (DKP) by the NRPS gliP. GliP is also able to produce the DKP cyclo-L-tryptophanyl-L-serine, suggesting that the substrate specificity of the first adenylation (A) domain in gliP is sufficiently relaxed to accommodate both L-Phe and L-Trp. The cytochrome P450 monooxygenase gliC has been shown to catalyze the subsequent hydroxylation of the alpha-carbon of L-Phe in cyclo-L-phenylalanyl-L-serine whereas the second cytochrome P450 enzyme, gliF, is presumably involved in the modification of the DKP side chain. The glutathione S-transferase (GST) gliG then forms a bis-glutathionylated biosynthetic intermediate which is responsible for the sulfurization of gliotoxin. This bis-glutathionylated intermediate is subsequently processed by the gamma-glutamyl cyclotransferase gliK to remove both gamma-glutamyl moieties. Subsequent processing via gliI yields a biosynthetic intermediate, which is N-methylated via the N-methyltransferase gliN, before the gliotoxin oxidoreductase gliT-mediated disulfide bridge closure. GliN-mediated amide methylation confers stability to ETP, damping the spontaneous formation of tri- and tetrasulfides. Intracellular dithiol gliotoxin oxidized by gliT is subsequently effluxed by gliA. Gliotoxin contributes to pathogenesis during invasive aspergillosis. In macrophages and neutrophils, gliotoxin showed inhibition of various different cell functions including cytokine production, antigen presentation, phagocytosis, and production of reactive oxygen species. The sequence is that of Gamma-glutamyl cyclotransferase gliK from Aspergillus fumigatus (strain ATCC MYA-4609 / CBS 101355 / FGSC A1100 / Af293) (Neosartorya fumigata).